The chain runs to 374 residues: Histidine biosynthesis bifunctional protein HisB (374 aa).

Residues 1-183 form a histidinol-phosphatase region; that stretch reads MKKKVLFIDR…RVAEFLFAGE (183 aa). D9 acts as the Nucleophile in catalysis. 3 residues coordinate Mg(2+): D9, D11, and D131. D11 acts as the Proton donor in catalysis. The segment at 184-374 is imidazoleglycerol-phosphate dehydratase; it reads RRAEIRRTTK…FELPSSKGVL (191 aa).

In the N-terminal section; belongs to the histidinol-phosphatase family. It in the C-terminal section; belongs to the imidazoleglycerol-phosphate dehydratase family. It depends on Mg(2+) as a cofactor.

Its subcellular location is the cytoplasm. The catalysed reaction is D-erythro-1-(imidazol-4-yl)glycerol 3-phosphate = 3-(imidazol-4-yl)-2-oxopropyl phosphate + H2O. It carries out the reaction L-histidinol phosphate + H2O = L-histidinol + phosphate. It participates in amino-acid biosynthesis; L-histidine biosynthesis; L-histidine from 5-phospho-alpha-D-ribose 1-diphosphate: step 6/9. It functions in the pathway amino-acid biosynthesis; L-histidine biosynthesis; L-histidine from 5-phospho-alpha-D-ribose 1-diphosphate: step 8/9. In Bacteroides fragilis (strain ATCC 25285 / DSM 2151 / CCUG 4856 / JCM 11019 / LMG 10263 / NCTC 9343 / Onslow / VPI 2553 / EN-2), this protein is Histidine biosynthesis bifunctional protein HisB.